The chain runs to 460 residues: Bifunctional protein GlmU (460 aa).

A pyrophosphorylase region spans residues 1–229 (MSNYAIILAA…FEESLGVNDR (229 aa)). UDP-N-acetyl-alpha-D-glucosamine contacts are provided by residues 8-11 (LAAG), lysine 22, glutamine 72, and 77-78 (GT). Mg(2+) is bound at residue aspartate 102. UDP-N-acetyl-alpha-D-glucosamine-binding residues include glycine 139, glutamate 154, asparagine 169, and asparagine 227. A Mg(2+)-binding site is contributed by asparagine 227. The tract at residues 230 to 250 (VALATAEDVMRRRINKTHMIN) is linker. Residues 251-460 (GVTFQNPNAT…KKPHHPSQQK (210 aa)) form an N-acetyltransferase region. UDP-N-acetyl-alpha-D-glucosamine is bound by residues arginine 332 and lysine 350. Catalysis depends on histidine 362, which acts as the Proton acceptor. Residues tyrosine 365 and asparagine 376 each contribute to the UDP-N-acetyl-alpha-D-glucosamine site. Residues alanine 379, 385–386 (NY), serine 404, alanine 422, and arginine 439 contribute to the acetyl-CoA site.

It in the N-terminal section; belongs to the N-acetylglucosamine-1-phosphate uridyltransferase family. This sequence in the C-terminal section; belongs to the transferase hexapeptide repeat family. As to quaternary structure, homotrimer. Requires Mg(2+) as cofactor.

Its subcellular location is the cytoplasm. The catalysed reaction is alpha-D-glucosamine 1-phosphate + acetyl-CoA = N-acetyl-alpha-D-glucosamine 1-phosphate + CoA + H(+). It carries out the reaction N-acetyl-alpha-D-glucosamine 1-phosphate + UTP + H(+) = UDP-N-acetyl-alpha-D-glucosamine + diphosphate. It functions in the pathway nucleotide-sugar biosynthesis; UDP-N-acetyl-alpha-D-glucosamine biosynthesis; N-acetyl-alpha-D-glucosamine 1-phosphate from alpha-D-glucosamine 6-phosphate (route II): step 2/2. The protein operates within nucleotide-sugar biosynthesis; UDP-N-acetyl-alpha-D-glucosamine biosynthesis; UDP-N-acetyl-alpha-D-glucosamine from N-acetyl-alpha-D-glucosamine 1-phosphate: step 1/1. Its pathway is bacterial outer membrane biogenesis; LPS lipid A biosynthesis. Functionally, catalyzes the last two sequential reactions in the de novo biosynthetic pathway for UDP-N-acetylglucosamine (UDP-GlcNAc). The C-terminal domain catalyzes the transfer of acetyl group from acetyl coenzyme A to glucosamine-1-phosphate (GlcN-1-P) to produce N-acetylglucosamine-1-phosphate (GlcNAc-1-P), which is converted into UDP-GlcNAc by the transfer of uridine 5-monophosphate (from uridine 5-triphosphate), a reaction catalyzed by the N-terminal domain. The sequence is that of Bifunctional protein GlmU from Streptococcus thermophilus (strain ATCC BAA-491 / LMD-9).